A 442-amino-acid polypeptide reads, in one-letter code: tRNA-2-methylthio-N(6)-dimethylallyladenosine synthase (442 aa).

The MTTase N-terminal domain maps to 6–122 (RKFYIHTFGC…LPALIAEAGD (117 aa)). 6 residues coordinate [4Fe-4S] cluster: Cys15, Cys51, Cys85, Cys157, Cys161, and Cys164. Residues 143 to 373 (RTQSLNAFVP…IDLQNGISAE (231 aa)) enclose the Radical SAM core domain. The region spanning 376–439 (GLAPGSVVEV…SATLFGQSAE (64 aa)) is the TRAM domain.

This sequence belongs to the methylthiotransferase family. MiaB subfamily. Monomer. The cofactor is [4Fe-4S] cluster.

Its subcellular location is the cytoplasm. It catalyses the reaction N(6)-dimethylallyladenosine(37) in tRNA + (sulfur carrier)-SH + AH2 + 2 S-adenosyl-L-methionine = 2-methylsulfanyl-N(6)-dimethylallyladenosine(37) in tRNA + (sulfur carrier)-H + 5'-deoxyadenosine + L-methionine + A + S-adenosyl-L-homocysteine + 2 H(+). Functionally, catalyzes the methylthiolation of N6-(dimethylallyl)adenosine (i(6)A), leading to the formation of 2-methylthio-N6-(dimethylallyl)adenosine (ms(2)i(6)A) at position 37 in tRNAs that read codons beginning with uridine. This is tRNA-2-methylthio-N(6)-dimethylallyladenosine synthase from Chlorobium phaeobacteroides (strain DSM 266 / SMG 266 / 2430).